A 326-amino-acid chain; its full sequence is Undecaprenyl-phosphate 4-deoxy-4-formamido-L-arabinose transferase (326 aa).

2 helical membrane-spanning segments follow: residues 236–256 (LSVVGSVIAVAGFLLAVLLIV) and 270–290 (VFTLFAILFMFIGAQFVAMGL).

This sequence belongs to the glycosyltransferase 2 family.

It is found in the cell inner membrane. The catalysed reaction is UDP-4-deoxy-4-formamido-beta-L-arabinose + di-trans,octa-cis-undecaprenyl phosphate = 4-deoxy-4-formamido-alpha-L-arabinopyranosyl di-trans,octa-cis-undecaprenyl phosphate + UDP. The protein operates within glycolipid biosynthesis; 4-amino-4-deoxy-alpha-L-arabinose undecaprenyl phosphate biosynthesis; 4-amino-4-deoxy-alpha-L-arabinose undecaprenyl phosphate from UDP-4-deoxy-4-formamido-beta-L-arabinose and undecaprenyl phosphate: step 1/2. Its pathway is bacterial outer membrane biogenesis; lipopolysaccharide biosynthesis. Functionally, catalyzes the transfer of 4-deoxy-4-formamido-L-arabinose from UDP to undecaprenyl phosphate. The modified arabinose is attached to lipid A and is required for resistance to polymyxin and cationic antimicrobial peptides. In Proteus mirabilis (strain HI4320), this protein is Undecaprenyl-phosphate 4-deoxy-4-formamido-L-arabinose transferase.